The following is an 843-amino-acid chain: Urease (843 aa).

Positions 400–843 (GGIDCHVHFI…VPLSRNYFLF (444 aa)) constitute a Urease domain. The Ni(2+) site is built by H405, H407, and K488. N6-carboxylysine is present on K488. H490 is a binding site for substrate. Ni(2+) contacts are provided by H517 and H543. The active-site Proton donor is H591. A Ni(2+)-binding site is contributed by D631.

This sequence in the C-terminal section; belongs to the metallo-dependent hydrolases superfamily. Urease alpha subunit family. Homohexamer. Other oligomeric forms may exist depending on pH and presence of salts. Requires Ni(2+) as cofactor. Post-translationally, carboxylation allows a single lysine to coordinate two nickel ions.

It catalyses the reaction urea + 2 H2O + H(+) = hydrogencarbonate + 2 NH4(+). The protein operates within nitrogen metabolism; urea degradation; CO(2) and NH(3) from urea (urease route): step 1/1. Functionally, urea hydrolase involved in nitrogen recycling from ureide, purine, and arginine catabolism. This is Urease from Oryza sativa subsp. indica (Rice).